The primary structure comprises 245 residues: Uridylate kinase (245 aa).

Residue 20-23 (KLSG) coordinates ATP. Gly60 contacts UMP. Gly61 and Arg65 together coordinate ATP. UMP contacts are provided by residues Asp80 and 141–148 (AGLPYFST). 2 residues coordinate ATP: Tyr175 and Asp178.

This sequence belongs to the UMP kinase family. In terms of assembly, homohexamer.

The protein localises to the cytoplasm. The catalysed reaction is UMP + ATP = UDP + ADP. Its pathway is pyrimidine metabolism; CTP biosynthesis via de novo pathway; UDP from UMP (UMPK route): step 1/1. With respect to regulation, inhibited by UTP. Catalyzes the reversible phosphorylation of UMP to UDP. In Paenarthrobacter aurescens (strain TC1), this protein is Uridylate kinase.